The primary structure comprises 474 residues: Hepatocyte nuclear factor 4-alpha (474 aa).

The nuclear receptor DNA-binding region spans 57-132 (SALCAICGDR…AGMKKEAVQN (76 aa)). NR C4-type zinc fingers lie at residues 60–80 (CAIC…CDGC) and 96–120 (CRFS…LKKC). 2 positions are modified to phosphoserine; by PKA: Ser142 and Ser143. Tyr144 carries the post-translational modification Phosphotyrosine. The NR LBD domain occupies 147–377 (SSLPSINALL…NLLQEMLLGG (231 aa)). Thr166 carries the post-translational modification Phosphothreonine. A Phosphoserine modification is found at Ser167. Residues Lys234 and Lys307 each participate in a glycyl lysine isopeptide (Lys-Gly) (interchain with G-Cter in ubiquitin) cross-link. Ser313 carries the post-translational modification Phosphoserine; by AMPK. Residues 368–376 (NLLQEMLLG) carry the 9aaTAD motif. The interval 413-450 (SNGQMCEWPRPRGQAATPETPQPSPPSGSGSESYKLLP) is disordered. Residues Thr429 and Thr432 each carry the phosphothreonine modification. Ser436 bears the Phosphoserine mark. Lys458 is subject to N6-acetyllysine.

The protein belongs to the nuclear hormone receptor family. NR2 subfamily. Homodimerization is required for HNF4-alpha to bind to its recognition site. Interacts with CLOCK, BMAL1, CRY1, CRY2, PER1 and PER2. Interacts with NR0B2/SHP; the resulting heterodimer is transcriptionally inactive. Interacts with DDX3X; this interaction disrupts the interaction between HNF4 and NR0B2 that forms inactive heterodimers and enhances the formation of active HNF4 homodimers. In terms of processing, phosphorylation at Ser-313 by AMPK reduces the ability to form homodimers and bind DNA. Phosphorylated in the recognition sequence R-R-S-S near the DNA-binding domain; phosphorylation results in decrease in DNA-binding activity. Phosphorylation of HNF4 depends on the diet and is decreased by a carbohydrate-rich diet and is increased by fasting. The N-terminus is blocked. Post-translationally, acetylation at Lys-458 lowers transcriptional activation by about two-fold. In terms of tissue distribution, liver, kidney and intestine.

The protein localises to the nucleus. Functionally, transcriptional regulator which controls the expression of hepatic genes during the transition of endodermal cells to hepatic progenitor cells, facilitating the recruitment of RNA pol II to the promoters of target genes. Activates the transcription of CYP2C38. Represses the CLOCK-BMAL1 transcriptional activity and is essential for circadian rhythm maintenance and period regulation in the liver and colon cells. The protein is Hepatocyte nuclear factor 4-alpha (Hnf4a) of Rattus norvegicus (Rat).